Here is a 73-residue protein sequence, read N- to C-terminus: Large ribosomal subunit protein bL31 (73 aa).

Residues C16, C18, C37, and C40 each coordinate Zn(2+).

This sequence belongs to the bacterial ribosomal protein bL31 family. Type A subfamily. In terms of assembly, part of the 50S ribosomal subunit. It depends on Zn(2+) as a cofactor.

Its function is as follows. Binds the 23S rRNA. The sequence is that of Large ribosomal subunit protein bL31 from Pseudomonas fluorescens (strain ATCC BAA-477 / NRRL B-23932 / Pf-5).